We begin with the raw amino-acid sequence, 452 residues long: Bifunctional protein GlmU (452 aa).

The segment at 1–232 is pyrophosphorylase; it reads MTARNSLTIV…EDEVRGINTK (232 aa). Residues 11–14, Lys25, Gln78, and 83–84 contribute to the UDP-N-acetyl-alpha-D-glucosamine site; these read LAAG and GT. Asp108 provides a ligand contact to Mg(2+). The UDP-N-acetyl-alpha-D-glucosamine site is built by Gly144, Glu158, Asn173, and Asn230. Asn230 contributes to the Mg(2+) binding site. Residues 233 to 253 form a linker region; the sequence is AQLAEAETVMQTRLRLAAMAA. The interval 254–452 is N-acetyltransferase; that stretch reads GVTLIAPETV…KSRHRKPKAH (199 aa). 2 residues coordinate UDP-N-acetyl-alpha-D-glucosamine: Arg319 and Lys337. His349 acts as the Proton acceptor in catalysis. UDP-N-acetyl-alpha-D-glucosamine is bound by residues Tyr352 and Asn363. Residues Ala366, 372-373, Ser391, Ser409, and Arg426 contribute to the acetyl-CoA site; that span reads NY.

In the N-terminal section; belongs to the N-acetylglucosamine-1-phosphate uridyltransferase family. It in the C-terminal section; belongs to the transferase hexapeptide repeat family. In terms of assembly, homotrimer. The cofactor is Mg(2+).

Its subcellular location is the cytoplasm. It catalyses the reaction alpha-D-glucosamine 1-phosphate + acetyl-CoA = N-acetyl-alpha-D-glucosamine 1-phosphate + CoA + H(+). It carries out the reaction N-acetyl-alpha-D-glucosamine 1-phosphate + UTP + H(+) = UDP-N-acetyl-alpha-D-glucosamine + diphosphate. The protein operates within nucleotide-sugar biosynthesis; UDP-N-acetyl-alpha-D-glucosamine biosynthesis; N-acetyl-alpha-D-glucosamine 1-phosphate from alpha-D-glucosamine 6-phosphate (route II): step 2/2. It participates in nucleotide-sugar biosynthesis; UDP-N-acetyl-alpha-D-glucosamine biosynthesis; UDP-N-acetyl-alpha-D-glucosamine from N-acetyl-alpha-D-glucosamine 1-phosphate: step 1/1. Its pathway is bacterial outer membrane biogenesis; LPS lipid A biosynthesis. Functionally, catalyzes the last two sequential reactions in the de novo biosynthetic pathway for UDP-N-acetylglucosamine (UDP-GlcNAc). The C-terminal domain catalyzes the transfer of acetyl group from acetyl coenzyme A to glucosamine-1-phosphate (GlcN-1-P) to produce N-acetylglucosamine-1-phosphate (GlcNAc-1-P), which is converted into UDP-GlcNAc by the transfer of uridine 5-monophosphate (from uridine 5-triphosphate), a reaction catalyzed by the N-terminal domain. The protein is Bifunctional protein GlmU of Rhodopseudomonas palustris (strain TIE-1).